Here is a 113-residue protein sequence, read N- to C-terminus: Large ribosomal subunit protein uL22 (113 aa).

This sequence belongs to the universal ribosomal protein uL22 family. As to quaternary structure, part of the 50S ribosomal subunit.

Functionally, this protein binds specifically to 23S rRNA; its binding is stimulated by other ribosomal proteins, e.g. L4, L17, and L20. It is important during the early stages of 50S assembly. It makes multiple contacts with different domains of the 23S rRNA in the assembled 50S subunit and ribosome. The globular domain of the protein is located near the polypeptide exit tunnel on the outside of the subunit, while an extended beta-hairpin is found that lines the wall of the exit tunnel in the center of the 70S ribosome. The protein is Large ribosomal subunit protein uL22 of Solibacter usitatus (strain Ellin6076).